The primary structure comprises 78 residues: Large ribosomal subunit protein bL28 (78 aa).

The segment at 1 to 24 is disordered; that stretch reads MSKVCQVTGKRPASGNNVSHAHNK.

Belongs to the bacterial ribosomal protein bL28 family.

The sequence is that of Large ribosomal subunit protein bL28 from Nitrosococcus oceani (strain ATCC 19707 / BCRC 17464 / JCM 30415 / NCIMB 11848 / C-107).